The sequence spans 134 residues: Thioredoxin H2-2 (134 aa).

Positions 1–20 are disordered; that stretch reads MGSFFSTMFTPPPAADDGGD. A Thioredoxin domain is found at 3–130; that stretch reads SFFSTMFTPP…LERKVNMFIS (128 aa). Active-site nucleophile residues include C56 and C59. An intrachain disulfide couples C56 to C59.

The protein belongs to the thioredoxin family. Plant H-type subfamily.

It localises to the cytoplasm. Probable thiol-disulfide oxidoreductase that may be involved in the redox regulation of a number of cytosolic enzymes. The polypeptide is Thioredoxin H2-2 (Oryza sativa subsp. japonica (Rice)).